We begin with the raw amino-acid sequence, 447 residues long: Argininosuccinate synthase (447 aa).

ATP is bound by residues 17 to 25 and alanine 43; that span reads AFSGGLDTS. Tyrosine 99 lines the L-citrulline pocket. The ATP site is built by glycine 129 and threonine 131. L-aspartate-binding residues include threonine 131, asparagine 135, and aspartate 136. L-citrulline is bound at residue asparagine 135. Aspartate 136 contacts ATP. Positions 139 and 192 each coordinate L-citrulline. Aspartate 194 contacts ATP. The L-citrulline site is built by threonine 201, glutamate 203, and glutamate 280.

Belongs to the argininosuccinate synthase family. Type 2 subfamily. Homotetramer.

It is found in the cytoplasm. It catalyses the reaction L-citrulline + L-aspartate + ATP = 2-(N(omega)-L-arginino)succinate + AMP + diphosphate + H(+). Its pathway is amino-acid biosynthesis; L-arginine biosynthesis; L-arginine from L-ornithine and carbamoyl phosphate: step 2/3. This Shigella dysenteriae serotype 1 (strain Sd197) protein is Argininosuccinate synthase.